The chain runs to 280 residues: 3,2-trans-enoyl-CoA isomerase (280 aa).

Residues 68–72 (SGADF) and leucine 126 each bind substrate. The Proton donor/acceptor role is filled by glutamate 158. The short motif at 278–280 (HRL) is the Microbody targeting signal element.

It belongs to the enoyl-CoA hydratase/isomerase family. In terms of assembly, homohexamer, dimer of trimers. Interacts with DCI1.

Its subcellular location is the peroxisome. It catalyses the reaction a (3Z)-enoyl-CoA = a 4-saturated (2E)-enoyl-CoA. The enzyme catalyses a (3E)-enoyl-CoA = a 4-saturated (2E)-enoyl-CoA. Its pathway is lipid metabolism; fatty acid beta-oxidation. Essential for the beta oxidation of unsaturated fatty acids. The protein is 3,2-trans-enoyl-CoA isomerase (ECI1) of Saccharomyces cerevisiae (strain ATCC 204508 / S288c) (Baker's yeast).